A 306-amino-acid chain; its full sequence is Ribonuclease Z (306 aa).

H61, H63, D65, H66, H137, D207, and H263 together coordinate Zn(2+). D65 functions as the Proton acceptor in the catalytic mechanism.

It belongs to the RNase Z family. As to quaternary structure, homodimer. Zn(2+) serves as cofactor.

The catalysed reaction is Endonucleolytic cleavage of RNA, removing extra 3' nucleotides from tRNA precursor, generating 3' termini of tRNAs. A 3'-hydroxy group is left at the tRNA terminus and a 5'-phosphoryl group is left at the trailer molecule.. In terms of biological role, zinc phosphodiesterase, which displays some tRNA 3'-processing endonuclease activity. Probably involved in tRNA maturation, by removing a 3'-trailer from precursor tRNA. The protein is Ribonuclease Z of Thermococcus sibiricus (strain DSM 12597 / MM 739).